The chain runs to 75 residues: Small ribosomal subunit protein bS18 (75 aa).

The protein belongs to the bacterial ribosomal protein bS18 family. As to quaternary structure, part of the 30S ribosomal subunit. Forms a tight heterodimer with protein bS6.

In terms of biological role, binds as a heterodimer with protein bS6 to the central domain of the 16S rRNA, where it helps stabilize the platform of the 30S subunit. The protein is Small ribosomal subunit protein bS18 of Buchnera aphidicola subsp. Baizongia pistaciae (strain Bp).